Consider the following 336-residue polypeptide: Glycerol-3-phosphate dehydrogenase [NAD(P)+] (336 aa).

Ser-16, Tyr-17, His-37, and Lys-111 together coordinate NADPH. The sn-glycerol 3-phosphate site is built by Lys-111, Gly-140, and Thr-142. Ala-144 contacts NADPH. Sn-glycerol 3-phosphate-binding residues include Lys-196, Asp-249, Ser-259, Arg-260, and Asn-261. The Proton acceptor role is filled by Lys-196. NADPH is bound at residue Arg-260. Residues Val-284 and Glu-286 each contribute to the NADPH site.

This sequence belongs to the NAD-dependent glycerol-3-phosphate dehydrogenase family.

The protein resides in the cytoplasm. The catalysed reaction is sn-glycerol 3-phosphate + NAD(+) = dihydroxyacetone phosphate + NADH + H(+). It catalyses the reaction sn-glycerol 3-phosphate + NADP(+) = dihydroxyacetone phosphate + NADPH + H(+). The protein operates within membrane lipid metabolism; glycerophospholipid metabolism. Catalyzes the reduction of the glycolytic intermediate dihydroxyacetone phosphate (DHAP) to sn-glycerol 3-phosphate (G3P), the key precursor for phospholipid synthesis. In Glaesserella parasuis serovar 5 (strain SH0165) (Haemophilus parasuis), this protein is Glycerol-3-phosphate dehydrogenase [NAD(P)+].